We begin with the raw amino-acid sequence, 89 residues long: MALTAEEKQEIIAKYATHEGDTGSPEVQVALLSKRIADLTEHLKEHKHDHHSRRGMQLMIGDRRRLLDYLKRVDINRYRSLIERLGLRR.

It belongs to the universal ribosomal protein uS15 family. As to quaternary structure, part of the 30S ribosomal subunit. Forms a bridge to the 50S subunit in the 70S ribosome, contacting the 23S rRNA.

One of the primary rRNA binding proteins, it binds directly to 16S rRNA where it helps nucleate assembly of the platform of the 30S subunit by binding and bridging several RNA helices of the 16S rRNA. In terms of biological role, forms an intersubunit bridge (bridge B4) with the 23S rRNA of the 50S subunit in the ribosome. This Bifidobacterium longum (strain DJO10A) protein is Small ribosomal subunit protein uS15.